The chain runs to 398 residues: Isopenicillin N epimerase (398 aa).

An N6-(pyridoxal phosphate)lysine modification is found at Lys219. The tract at residues 243-264 (PQVSWGYRPDGENPSDERNRFG) is disordered. The segment covering 251 to 264 (PDGENPSDERNRFG) has biased composition (basic and acidic residues).

Belongs to the class-V pyridoxal-phosphate-dependent aminotransferase family. Pyridoxal 5'-phosphate is required as a cofactor.

It catalyses the reaction isopenicillin N = penicillin N. Its pathway is antibiotic biosynthesis; cephalosporin C biosynthesis. Catalyzes the reversible isomerization between isopenicillin N and penicillin N. The polypeptide is Isopenicillin N epimerase (cefD) (Amycolatopsis lactamdurans (Nocardia lactamdurans)).